The chain runs to 313 residues: Ribosomal RNA small subunit methyltransferase H (313 aa).

S-adenosyl-L-methionine contacts are provided by residues 35–37 (GGH), Asp55, Phe80, Asp102, and Gln109.

This sequence belongs to the methyltransferase superfamily. RsmH family.

Its subcellular location is the cytoplasm. The enzyme catalyses cytidine(1402) in 16S rRNA + S-adenosyl-L-methionine = N(4)-methylcytidine(1402) in 16S rRNA + S-adenosyl-L-homocysteine + H(+). Its function is as follows. Specifically methylates the N4 position of cytidine in position 1402 (C1402) of 16S rRNA. The sequence is that of Ribosomal RNA small subunit methyltransferase H from Shewanella sp. (strain MR-7).